Consider the following 620-residue polypeptide: Chaperone protein DnaK (620 aa).

T197 bears the Phosphothreonine; by autocatalysis mark. A disordered region spans residues 597 to 620 (AMANKNNAEQPKKKDDDVIDAEVE).

The protein belongs to the heat shock protein 70 family.

Functionally, acts as a chaperone. The polypeptide is Chaperone protein DnaK (Helicobacter pylori (strain G27)).